Reading from the N-terminus, the 488-residue chain is Ribulose bisphosphate carboxylase large chain (488 aa).

2 residues coordinate substrate: Asn-127 and Thr-177. The active-site Proton acceptor is Lys-179. Lys-181 serves as a coordination point for substrate. Residues Lys-205, Asp-207, and Glu-208 each coordinate Mg(2+). Position 205 is an N6-carboxylysine (Lys-205). His-297 serves as the catalytic Proton acceptor. 3 residues coordinate substrate: Arg-298, His-330, and Ser-382.

This sequence belongs to the RuBisCO large chain family. Type I subfamily. As to quaternary structure, heterohexadecamer of 8 large chains and 8 small chains. It depends on Mg(2+) as a cofactor.

It is found in the plastid. It localises to the chloroplast. The enzyme catalyses 2 (2R)-3-phosphoglycerate + 2 H(+) = D-ribulose 1,5-bisphosphate + CO2 + H2O. The catalysed reaction is D-ribulose 1,5-bisphosphate + O2 = 2-phosphoglycolate + (2R)-3-phosphoglycerate + 2 H(+). In terms of biological role, ruBisCO catalyzes two reactions: the carboxylation of D-ribulose 1,5-bisphosphate, the primary event in carbon dioxide fixation, as well as the oxidative fragmentation of the pentose substrate in the photorespiration process. Both reactions occur simultaneously and in competition at the same active site. The sequence is that of Ribulose bisphosphate carboxylase large chain from Porphyra purpurea (Red seaweed).